The sequence spans 69 residues: Large ribosomal subunit protein bL31 (69 aa).

Residues Cys-16, Cys-18, Cys-36, and Cys-39 each contribute to the Zn(2+) site.

Belongs to the bacterial ribosomal protein bL31 family. Type A subfamily. Part of the 50S ribosomal subunit. Zn(2+) serves as cofactor.

Functionally, binds the 23S rRNA. The protein is Large ribosomal subunit protein bL31 of Kosmotoga olearia (strain ATCC BAA-1733 / DSM 21960 / TBF 19.5.1).